The primary structure comprises 428 residues: Enolase (428 aa).

Gln-163 lines the (2R)-2-phosphoglycerate pocket. Glu-205 acts as the Proton donor in catalysis. Residues Asp-242, Glu-285, and Asp-312 each contribute to the Mg(2+) site. The (2R)-2-phosphoglycerate site is built by Lys-337, Arg-366, Ser-367, and Lys-388. The active-site Proton acceptor is Lys-337.

It belongs to the enolase family. Requires Mg(2+) as cofactor.

Its subcellular location is the cytoplasm. The protein localises to the secreted. It is found in the cell surface. It carries out the reaction (2R)-2-phosphoglycerate = phosphoenolpyruvate + H2O. Its pathway is carbohydrate degradation; glycolysis; pyruvate from D-glyceraldehyde 3-phosphate: step 4/5. Functionally, catalyzes the reversible conversion of 2-phosphoglycerate (2-PG) into phosphoenolpyruvate (PEP). It is essential for the degradation of carbohydrates via glycolysis. The polypeptide is Enolase (Nitrosomonas europaea (strain ATCC 19718 / CIP 103999 / KCTC 2705 / NBRC 14298)).